The sequence spans 364 residues: Fructose-bisphosphate aldolase A (364 aa).

T9 is subject to Phosphothreonine. 2 positions are modified to phosphoserine: S36 and S39. Position 42 is an N6-acetyllysine; alternate (K42). Residue K42 forms a Glycyl lysine isopeptide (Lys-Gly) (interchain with G-Cter in SUMO1); alternate linkage. K42 is covalently cross-linked (Glycyl lysine isopeptide (Lys-Gly) (interchain with G-Cter in SUMO2); alternate). Residue R43 coordinates beta-D-fructose 1,6-bisphosphate. A Phosphoserine modification is found at S46. An N6-(2-hydroxyisobutyryl)lysine modification is found at K99. At K108 the chain carries N6-acetyllysine. N6-acetyllysine; alternate is present on K111. Position 111 is an N6-malonyllysine; alternate (K111). S132 bears the Phosphoserine mark. At K147 the chain carries N6-(2-hydroxyisobutyryl)lysine. The Proton acceptor role is filled by E188. The active-site Schiff-base intermediate with dihydroxyacetone-P is K230. S272 is modified (phosphoserine). Residues 272–274 (SGG), S301, and R304 each bind beta-D-fructose 1,6-bisphosphate. K312 is subject to N6-malonyllysine. K330 carries the N6-acetyllysine modification. N361 is subject to Deamidated asparagine; in form beta.

Belongs to the class I fructose-bisphosphate aldolase family. As to quaternary structure, homotetramer. Interacts with SNX9 and WAS. Interacts with FBP2; the interaction blocks FBP2 inhibition by physiological concentrations of AMP and reduces inhibition by Ca(2+). Asn-361 in form alpha is deaminated to Asp in form beta.

It is found in the cytoplasm. Its subcellular location is the myofibril. It localises to the sarcomere. The protein resides in the i band. The protein localises to the m line. The catalysed reaction is beta-D-fructose 1,6-bisphosphate = D-glyceraldehyde 3-phosphate + dihydroxyacetone phosphate. It functions in the pathway carbohydrate degradation; glycolysis; D-glyceraldehyde 3-phosphate and glycerone phosphate from D-glucose: step 4/4. In terms of biological role, plays a key role in glycolysis and gluconeogenesis. In addition, may also function as scaffolding protein. The polypeptide is Fructose-bisphosphate aldolase A (ALDOA) (Oryctolagus cuniculus (Rabbit)).